We begin with the raw amino-acid sequence, 230 residues long: Claudin-2 (230 aa).

Topologically, residues 1–7 (MASLGLQ) are cytoplasmic. Residues 8–28 (LVGYILGLLGLLGTLVAMLLP) traverse the membrane as a helical segment. Topologically, residues 29–81 (SWRTSSYVGTSIVTAVGFSKGLWMECATHSTGITQCDIYSTLLGLPADIQAAQ) are extracellular. A disulfide bond links C54 and C64. A helical membrane pass occupies residues 82–102 (AMMVTSSAISSLACIVSVVGM). Residues 103-116 (RCTVFCQDSRAKDR) are Cytoplasmic-facing. A helical membrane pass occupies residues 117-137 (LAVVGGVFFIIGGLLGFIPVA). The Extracellular segment spans residues 138 to 162 (WNLHGILRDFYSPLVPDSMKFEIGE). Residues 163–183 (ALYLGIISSLFSLVAGIILCF) form a helical membrane-spanning segment. Over 184–230 (SCPLQGNRSDYYDSYQAQPLATRGSPRPGQPPKAKSEFNSYSLTGYV) the chain is Cytoplasmic. The segment at 205–230 (TRGSPRPGQPPKAKSEFNSYSLTGYV) is disordered. K218 participates in a covalent cross-link: Glycyl lysine isopeptide (Lys-Gly) (interchain with G-Cter in SUMO). A phosphoserine mark is found at S219 and S223. A compositionally biased stretch (polar residues) spans 220 to 230 (EFNSYSLTGYV). Residues 229-230 (YV) are interaction with TJP1, TJP2 and TJP3.

This sequence belongs to the claudin family. As to quaternary structure, can form homo- and heteropolymers with other claudins to mediate paracellular barrier and channel functions of tight junctions in response to physiological stimuli. Homopolymers interact with CLDN3, but not CLDN1, homopolymers. Directly interacts with TJP1/ZO-1, TJP2/ZO-2 and TJP3/ZO-3. Post-translationally, the disulfide bond is necessary for pore formation, but is not required for correct protein trafficking.

The protein localises to the cell junction. Its subcellular location is the tight junction. It localises to the cell membrane. The catalysed reaction is Na(+)(in) = Na(+)(out). The enzyme catalyses K(+)(in) = K(+)(out). It catalyses the reaction Rb(+)(in) = Rb(+)(out). It carries out the reaction Li(+)(in) = Li(+)(out). The catalysed reaction is Cs(+)(in) = Cs(+)(out). The enzyme catalyses Ca(2+)(in) = Ca(2+)(out). It catalyses the reaction methylamine(out) = methylamine(in). It carries out the reaction choline(out) = choline(in). The catalysed reaction is H2O(in) = H2O(out). In terms of biological role, forms paracellular channels: polymerizes in tight junction strands with cation- and water-selective channels through the strands, conveying epithelial permeability in a process known as paracellular tight junction permeability. In intestinal epithelium, allows for sodium and water fluxes from the peritoneal side to the lumen of the intestine to regulate nutrient absorption and clear enteric pathogens as part of mucosal immune response. In kidney, allows passive sodium and calcium reabsorption across proximal tubules from the lumen back to the bloodstream. In the hepatobiliary tract, allows paracellular water and cation fluxes in the hepatic perivenous areas and biliary epithelium to generate bile flow and maintain osmotic gradients. This is Claudin-2 (CLDN2) from Canis lupus familiaris (Dog).